The sequence spans 540 residues: T-complex protein 1 subunit delta (540 aa).

Low complexity predominate over residues 1 to 12 (MPPAVPAAAATA). The tract at residues 1–32 (MPPAVPAAAATARQSASGRERNFKDKDKPESV) is disordered. Basic and acidic residues predominate over residues 18–31 (GRERNFKDKDKPES).

Belongs to the TCP-1 chaperonin family. As to quaternary structure, heterooligomeric complex of about 850 to 900 kDa that forms two stacked rings, 12 to 16 nm in diameter.

It is found in the cytoplasm. Its function is as follows. Molecular chaperone; assists the folding of proteins upon ATP hydrolysis. Known to play a role, in vitro, in the folding of actin and tubulin. The sequence is that of T-complex protein 1 subunit delta (cct-4) from Caenorhabditis elegans.